We begin with the raw amino-acid sequence, 645 residues long: Sister chromatid cohesion protein 1 (645 aa).

Disordered regions lie at residues 292–311 (FEPE…FALE), 495–527 (QSGF…GQLE), and 619–645 (CPLS…MRPV).

The protein belongs to the rad21 family. As to quaternary structure, component of the cohesin complex, composed of the smc-1 and smc-3 heterodimer attached via their hinge domain, scc-1 which links them, and scc-3. Interacts with smc-1, smc-3, scc-3 and tim-1.

The protein resides in the nucleus. The protein localises to the chromosome. It is found in the cytoplasm. In terms of biological role, cleavable component of the cohesin complex involved in chromosome cohesion during cell cycle. The cohesin complex is required for the cohesion of sister chromatids after DNA replication. The cohesin complex apparently forms a large proteinaceous ring within which sister chromatids can be trapped. At metaphase-anaphase transition, this protein is cleaved and dissociates from chromatin, allowing sister chromatids to segregate. The polypeptide is Sister chromatid cohesion protein 1 (Caenorhabditis elegans).